A 406-amino-acid chain; its full sequence is Tryptophan 2,3-dioxygenase A (406 aa).

Substrate-binding positions include 71 to 75 (FIVTH) and R143. A heme-binding site is contributed by H327. T341 is a substrate binding site.

This sequence belongs to the tryptophan 2,3-dioxygenase family. Homotetramer. Dimer of dimers. It depends on heme as a cofactor.

It carries out the reaction L-tryptophan + O2 = N-formyl-L-kynurenine. The protein operates within amino-acid degradation; L-tryptophan degradation via kynurenine pathway; L-kynurenine from L-tryptophan: step 1/2. Functionally, heme-dependent dioxygenase that catalyzes the oxidative cleavage of the L-tryptophan (L-Trp) pyrrole ring and converts L-tryptophan to N-formyl-L-kynurenine. Catalyzes the oxidative cleavage of the indole moiety. This is Tryptophan 2,3-dioxygenase A from Danio rerio (Zebrafish).